The following is an 849-amino-acid chain: MTASVARFIESFIPENYNLFLDINRSEKTFTGNVAITGEAIDNHISLHQKDLTINSVLLDNESLNFQMDDANEAFHIELPETGVLTIFIEFSGRITDNMTGIYPSYYTYNGEKKEIISTQFEISHFAREAFPCVDEPEAKATFDLSLKFDAEEGDTALSNMPEINSHLREETGVWTFETTPRMSTYLLAFGFGALHGKTAKTKNGTEVGVFATVAQAENSFDFALDIAVRVIEFYEDYFQVKYPIPLSYHLALPDFSAGAMENWGLVTYREVYLLVDENSSAASRQQVALVVAHELAHQWFGNLVTMKWWDDLWLNESFANMMEYVSVNAIEPSWNIFEGFPNKLGVPNALQRDATDGVQSVHMEVSHPDEINTLFDSAIVYAKGSRLMHMLRRWLGDEAFAKGLKAYFEKHQYNNTVGRDLWNALSEASGKDVSSFMDTWLEQPGYPVVSAEVVDDTLILSQKQFFIGEHEDKGRLWEIPLNTNWNGLPDTLSGERIEIPNYSQLATENNGVLRLNTANTAHYITDYQGQLLDNILEDFANLDTVSKLQILQERRLLAESGRISYASLVGLLDLVEKEESFFLISQAKSQILAGLKRFIDEDTEAEVHYKALVRRQFQNDFERLGFDAKEGESDEDEMVRQTALSYLIEADYQPTVLAAANVFQAHKENIESIPASIRGLVLINQMKQENSLSLVEEYINAYVATNDSNFRRQLTQALSYLKNQEGLDYVLGQLKDKNVVKPQDLYLWYMNFLSKSFAQETVWDWAKENWEWIKAALGGDMSFDSFVNIPAGIFKNQERLDQYIAFFEPQTSDKALERNILMGIKTIAARVDLIEKEKAAVESALKDY.

Substrate contacts are provided by residues Glu122 and 259-263 (GAMEN). Zn(2+) is bound at residue His294. Glu295 (proton acceptor) is an active-site residue. Residues His298 and Glu317 each contribute to the Zn(2+) site.

Belongs to the peptidase M1 family. Monomer. Zn(2+) serves as cofactor.

It is found in the cytoplasm. It carries out the reaction Release of an N-terminal amino acid, Xaa-|-Yaa- from a peptide, amide or arylamide. Xaa is preferably Ala, but may be most amino acids including Pro (slow action). When a terminal hydrophobic residue is followed by a prolyl residue, the two may be released as an intact Xaa-Pro dipeptide.. Its function is as follows. Aminopeptidase with broad substrate specificity to several peptides. It has more affinity for oligopeptides than for dipeptides. It plays an essential role in the metabolism, it may be involved in nitrogen supply or protein turnover. The polypeptide is Aminopeptidase N (pepN) (Lactococcus lactis subsp. lactis (Streptococcus lactis)).